The primary structure comprises 262 residues: Phosphatidylglycerol--prolipoprotein diacylglyceryl transferase (262 aa).

Transmembrane regions (helical) follow at residues 9 to 29 (LGPL…ILAV), 41 to 61 (IIPD…ILGA), 80 to 100 (IFAI…GALV), and 109 to 129 (LINT…AQSL). Arginine 131 contacts a 1,2-diacyl-sn-glycero-3-phospho-(1'-sn-glycerol). 3 helical membrane-spanning segments follow: residues 167–187 (QPTF…ILIF), 197–217 (GHIT…IEGM), and 226–246 (GFRV…MIVI).

It belongs to the Lgt family.

The protein localises to the cell membrane. The enzyme catalyses L-cysteinyl-[prolipoprotein] + a 1,2-diacyl-sn-glycero-3-phospho-(1'-sn-glycerol) = an S-1,2-diacyl-sn-glyceryl-L-cysteinyl-[prolipoprotein] + sn-glycerol 1-phosphate + H(+). It participates in protein modification; lipoprotein biosynthesis (diacylglyceryl transfer). Catalyzes the transfer of the diacylglyceryl group from phosphatidylglycerol to the sulfhydryl group of the N-terminal cysteine of a prolipoprotein, the first step in the formation of mature lipoproteins. The sequence is that of Phosphatidylglycerol--prolipoprotein diacylglyceryl transferase from Streptococcus pneumoniae serotype 4 (strain ATCC BAA-334 / TIGR4).